Reading from the N-terminus, the 466-residue chain is UDP-N-acetylmuramoylalanine--D-glutamate ligase (466 aa).

An ATP-binding site is contributed by 121–127; sequence GTNGKST.

It belongs to the MurCDEF family.

Its subcellular location is the cytoplasm. It carries out the reaction UDP-N-acetyl-alpha-D-muramoyl-L-alanine + D-glutamate + ATP = UDP-N-acetyl-alpha-D-muramoyl-L-alanyl-D-glutamate + ADP + phosphate + H(+). It participates in cell wall biogenesis; peptidoglycan biosynthesis. In terms of biological role, cell wall formation. Catalyzes the addition of glutamate to the nucleotide precursor UDP-N-acetylmuramoyl-L-alanine (UMA). The protein is UDP-N-acetylmuramoylalanine--D-glutamate ligase of Mesorhizobium japonicum (strain LMG 29417 / CECT 9101 / MAFF 303099) (Mesorhizobium loti (strain MAFF 303099)).